The chain runs to 260 residues: Snake venom serine protease salmobin (260 aa).

A signal peptide spans 1-18 (MVLIKVLANHLILQLSYA). A propeptide spanning residues 19-24 (QKSSEL) is cleaved from the precursor. Residues 25–251 (VIGGDECNIN…YTDWIQSIIA (227 aa)) enclose the Peptidase S1 domain. 6 disulfide bridges follow: Cys31/Cys165, Cys52/Cys68, Cys102/Cys258, Cys144/Cys212, Cys176/Cys191, and Cys202/Cys227. The active-site Charge relay system is the His67. N-linked (GlcNAc...) asparagine glycosylation occurs at Asn105. Asp112 acts as the Charge relay system in catalysis. N-linked (GlcNAc...) asparagine glycans are attached at residues Asn123 and Asn156. The Charge relay system role is filled by Ser206.

This sequence belongs to the peptidase S1 family. Snake venom subfamily. Monomer. In terms of tissue distribution, expressed by the venom gland.

It localises to the secreted. Its function is as follows. Snake venom serine protease that may act in the hemostasis system of the prey. This Gloydius halys (Chinese water mocassin) protein is Snake venom serine protease salmobin.